Consider the following 357-residue polypeptide: Protein Wnt-8c (357 aa).

The signal sequence occupies residues 1–16; that stretch reads MRGSTFLLLSIVGIYG. A disulfide bridge connects residues cysteine 55 and cysteine 66. Asparagine 104 carries N-linked (GlcNAc...) asparagine glycosylation. Cystine bridges form between cysteine 105-cysteine 113, cysteine 115-cysteine 133, cysteine 181-cysteine 195, cysteine 183-cysteine 190, cysteine 260-cysteine 298, cysteine 276-cysteine 291, cysteine 313-cysteine 328, cysteine 315-cysteine 325, and cysteine 320-cysteine 321. Serine 187 carries O-palmitoleoyl serine lipidation. 2 N-linked (GlcNAc...) asparagine glycosylation sites follow: asparagine 263 and asparagine 282. N-linked (GlcNAc...) asparagine glycosylation is present at asparagine 346.

This sequence belongs to the Wnt family. Palmitoleoylation is required for efficient binding to frizzled receptors. Depalmitoleoylation leads to Wnt signaling pathway inhibition. Post-translationally, proteolytic processing by tiki1 and tiki2 promotes oxidation and formation of large disulfide-bond oligomers, leading to inactivation of wnt8c. In terms of tissue distribution, cells that form rhombomere 4. Hensen node and the neural plate immediately anterior to it.

The protein resides in the secreted. It is found in the extracellular space. It localises to the extracellular matrix. Its function is as follows. Ligand for members of the frizzled family of seven transmembrane receptors. Probable developmental protein. Is likely to signal over only few cell diameters. May be involved in the regulation of axis formation and in the rhombomere specification. This Gallus gallus (Chicken) protein is Protein Wnt-8c (WNT8C).